The sequence spans 394 residues: Acetate kinase (394 aa).

Asparagine 7 lines the Mg(2+) pocket. ATP is bound at residue lysine 14. Substrate is bound at residue arginine 88. The active-site Proton donor/acceptor is the aspartate 145. ATP-binding positions include 205 to 209 (HLGNG), 279 to 281 (DFR), and 327 to 331 (GIGEN). Residue glutamate 379 coordinates Mg(2+).

It belongs to the acetokinase family. As to quaternary structure, homodimer. Requires Mg(2+) as cofactor. It depends on Mn(2+) as a cofactor.

Its subcellular location is the cytoplasm. It carries out the reaction acetate + ATP = acetyl phosphate + ADP. It functions in the pathway metabolic intermediate biosynthesis; acetyl-CoA biosynthesis; acetyl-CoA from acetate: step 1/2. Its function is as follows. Catalyzes the formation of acetyl phosphate from acetate and ATP. Can also catalyze the reverse reaction. The sequence is that of Acetate kinase from Campylobacter lari (strain RM2100 / D67 / ATCC BAA-1060).